The chain runs to 212 residues: Endothelin-1 (212 aa).

The signal sequence occupies residues 1–17 (MDYLLMIFSLLFVACQG). Residues 18 to 50 (APETAVLGAELSAVGENGGEKPTPSPPWRLRRS) constitute a propeptide that is removed on maturation. Cystine bridges form between C53-C67 and C55-C63. A propeptide spanning residues 74–212 (VNTPEHVVPY…RYVTHNRAHW (139 aa)) is cleaved from the precursor. Residues 109–123 (CQCASQKDKKCWNFC) are endothelin-like. Composition is skewed to basic and acidic residues over residues 168 to 181 (RSSE…RSET) and 189 to 205 (SFHD…ERYV). A disordered region spans residues 168–212 (RSSEEHLRQTRSETMRNSVKSSFHDPKLKGKPSRERYVTHNRAHW).

Belongs to the endothelin/sarafotoxin family. Expressed in lung, placental stem villi vessels and in cultured placental vascular smooth muscle cells.

The protein resides in the secreted. Its function is as follows. Endothelins are endothelium-derived vasoconstrictor peptides. Probable ligand for G-protein coupled receptors EDNRA and EDNRB which activates PTK2B, BCAR1, BCAR3 and, GTPases RAP1 and RHOA cascade in glomerular mesangial cells. Also binds the DEAR/FBXW7-AS1 receptor. Promotes mesenteric arterial wall remodeling via activation of ROCK signaling and subsequent colocalization of NFATC3 with F-actin filaments. NFATC3 then translocates to the nucleus where it subsequently promotes the transcription of the smooth muscle hypertrophy and differentiation marker ACTA2. This is Endothelin-1 (EDN1) from Homo sapiens (Human).